A 205-amino-acid polypeptide reads, in one-letter code: Cytochrome bo(3) ubiquinol oxidase subunit 3 (205 aa).

Topologically, residues 1–26 are cytoplasmic; sequence MIENKFNNTILNSNSSTHDKISETKK. The chain crosses the membrane as a helical span at residues 27–47; the sequence is LFGLWIYLMSDCIMFAVLFAV. Residues 48–69 are Extracellular-facing; it reads YAIVSSNISINLISNKIFNLSS. The chain crosses the membrane as a helical span at residues 70-90; that stretch reads ILLETFLLLLSSLSCGFVVIA. Topologically, residues 91 to 97 are cytoplasmic; the sequence is MNQKRIK. Residues 98–118 traverse the membrane as a helical segment; that stretch reads MIYSFLTITFIFGLIFLLMEV. At 119-138 the chain is on the extracellular side; that stretch reads HEFYELIIENFGPDKNAFFS. A helical transmembrane segment spans residues 139-159; the sequence is IFFTLVATHGVHIFFGLILIL. At 160-177 the chain is on the cytoplasmic side; the sequence is SILYQIKKLGLTNSIRTR. The chain crosses the membrane as a helical span at residues 178–198; it reads ILCFSVFWHFLDIIWICVFTF. At 199–205 the chain is on the extracellular side; it reads VYLNGAI.

It belongs to the cytochrome c oxidase subunit 3 family. Heterooctamer of two A chains, two B chains, two C chains and two D chains.

The protein localises to the cell membrane. Its function is as follows. Cytochrome bo(3) ubiquinol terminal oxidase is the component of the aerobic respiratory chain of E.coli that predominates when cells are grown at high aeration. Has proton pump activity across the membrane in addition to electron transfer, pumping 2 protons/electron. The sequence is that of Cytochrome bo(3) ubiquinol oxidase subunit 3 (cyoC) from Buchnera aphidicola subsp. Acyrthosiphon pisum (strain APS) (Acyrthosiphon pisum symbiotic bacterium).